Here is a 325-residue protein sequence, read N- to C-terminus: Replication factor C small subunit (325 aa).

Gly-45–Thr-52 contributes to the ATP binding site.

Belongs to the activator 1 small subunits family. RfcS subfamily. Heteromultimer composed of small subunits (RfcS) and large subunits (RfcL).

Part of the RFC clamp loader complex which loads the PCNA sliding clamp onto DNA. The polypeptide is Replication factor C small subunit (Sulfolobus acidocaldarius (strain ATCC 33909 / DSM 639 / JCM 8929 / NBRC 15157 / NCIMB 11770)).